Consider the following 175-residue polypeptide: Methylmalonyl-CoA epimerase, mitochondrial (175 aa).

The transit peptide at 1–35 directs the protein to the mitochondrion; sequence MARVLKVAAASAAGLFPRLRTPVSTVRTSASLSSH. Residues 46–175 form the VOC domain; it reads RLNHVAVAVP…GGVLVELEQA (130 aa). Residue His49 participates in Co(2+) binding. Lys113 bears the N6-succinyllysine mark. His121 contacts Co(2+). The residue at position 149 (Lys149) is an N6-acetyllysine; alternate. The residue at position 149 (Lys149) is an N6-succinyllysine; alternate. Glu171 contacts Co(2+).

Belongs to the methylmalonyl-CoA epimerase family.

It is found in the mitochondrion. The enzyme catalyses (R)-methylmalonyl-CoA = (S)-methylmalonyl-CoA. In terms of biological role, methylmalonyl-CoA epimerase involved in propionyl-CoA metabolism. This Bos taurus (Bovine) protein is Methylmalonyl-CoA epimerase, mitochondrial (MCEE).